Reading from the N-terminus, the 364-residue chain is uncharacterized protein (364 aa).

This is an uncharacterized protein from Acanthamoeba polyphaga mimivirus (APMV).